Reading from the N-terminus, the 265-residue chain is Interleukin-1 alpha (265 aa).

A propeptide spanning residues 1–108 (MAKVPDLFED…DTEEVIMKPR (108 aa)) is cleaved from the precursor. At Lys78 the chain carries N6-acetyllysine. The segment at 78 to 82 (KKRRL) is nuclear localization signal (NLS). Ser83 carries the post-translational modification Phosphoserine. Asn98 and Asn137 each carry an N-linked (GlcNAc...) asparagine glycan.

The protein belongs to the IL-1 family. In terms of assembly, monomer. Interacts with TMED10; the interaction mediates the translocation from the cytoplasm into the ERGIC (endoplasmic reticulum-Golgi intermediate compartment) and thereby secretion. Interacts with IL1R1. Interacts with S100A13; this interaction is the first step in the export of IL1A, followed by direct translocation of this complex across the plasma membrane. In terms of processing, acetylated within its nuclear localization sequence, which impacts subcellular localization. Post-translationally, proteolytic processed by CAPN1 in a calcium-dependent manner. Cleavage from 31 kDa precursor to 18 kDa biologically active molecules. Phosphorylated. Phosphorylation greatly enhances susceptibility to digestion and promotes the conversion of pre-IL1A alpha to the biologically active IL1A.

It is found in the nucleus. The protein resides in the cytoplasm. The protein localises to the secreted. In terms of biological role, cytokine constitutively present intracellularly in nearly all resting non-hematopoietic cells that plays an important role in inflammation and bridges the innate and adaptive immune systems. After binding to its receptor IL1R1 together with its accessory protein IL1RAP, forms the high affinity interleukin-1 receptor complex. Signaling involves the recruitment of adapter molecules such as MYD88, IRAK1 or IRAK4. In turn, mediates the activation of NF-kappa-B and the three MAPK pathways p38, p42/p44 and JNK pathways. Within the cell, acts as an alarmin and cell death results in its liberation in the extracellular space after disruption of the cell membrane to induce inflammation and alert the host to injury or damage. In addition to its role as a danger signal, which occurs when the cytokine is passively released by cell necrosis, directly senses DNA damage and acts as signal for genotoxic stress without loss of cell integrity. The sequence is that of Interleukin-1 alpha (IL1A) from Canis lupus familiaris (Dog).